The sequence spans 153 residues: Prostaglandin E synthase (153 aa).

At 1-13 (MPSPGLVMESGQV) the chain is on the lumenal side. A helical membrane pass occupies residues 14 to 42 (LPAFLLCSTLLVIKMYAVAVITGQMRLRK). Arg-39 serves as a coordination point for glutathione. Topologically, residues 43–61 (KAFANPEDALKRGGLQYYR) are cytoplasmic. Residues 62-91 (SDPDVERCLRAHRNDMETIYPFLFLGFVYS) traverse the membrane as a helical segment. 74–78 (RNDME) contacts glutathione. Over 92-96 (FLGPN) the chain is Lumenal. A helical membrane pass occupies residues 97-120 (PLIAWIHFLVVLTGRVVHTVAYLG). Residues His-114 and Tyr-118 each contribute to the glutathione site. Over 121–124 (KLNP) the chain is Cytoplasmic. The chain crosses the membrane as a helical span at residues 125–153 (RLRSGAYVLAQFSCFSMALQILWEVAHHL). 127–131 (RSGAY) is a glutathione binding site.

Belongs to the MAPEG family. As to quaternary structure, homotrimer. It depends on glutathione as a cofactor.

The protein resides in the membrane. It is found in the cytoplasm. Its subcellular location is the perinuclear region. The catalysed reaction is prostaglandin H2 = prostaglandin E2. It carries out the reaction 2-glyceryl-prostaglandin H2 = 2-glyceryl-prostaglandin E2. The enzyme catalyses prostaglandin G2 = (15S)-15-hydroperoxy-prostaglandin E2. It catalyses the reaction 1-chloro-2,4-dinitrobenzene + glutathione = 2,4-dinitrophenyl-S-glutathione + chloride + H(+). The catalysed reaction is (5S)-hydroperoxy-(6E,8Z,11Z,14Z)-eicosatetraenoate + 2 glutathione = (5S)-hydroxy-(6E,8Z,11Z,14Z)-eicosatetraenoate + glutathione disulfide + H2O. The protein operates within lipid metabolism; prostaglandin biosynthesis. With respect to regulation, activity is increased markedly in macrophages and osteoblasts following pro-inflammatory stimuli. Its function is as follows. Terminal enzyme of the cyclooxygenase (COX)-2-mediated prostaglandin E2 (PGE2) biosynthetic pathway. Catalyzes the glutathione-dependent oxidoreduction of prostaglandin endoperoxide H2 (PGH2) to prostaglandin E2 (PGE2) in response to inflammatory stimuli. Plays a key role in inflammation response, fever and pain. Also catalyzes the oxidoreduction of endocannabinoids into prostaglandin glycerol esters and PGG2 into 15-hydroperoxy-PGE2. In addition, displays low glutathione transferase and glutathione-dependent peroxidase activities, toward 1-chloro-2,4-dinitrobenzene and 5-hydroperoxyicosatetraenoic acid (5-HPETE), respectively. This is Prostaglandin E synthase (Ptges) from Mus musculus (Mouse).